The primary structure comprises 1181 residues: Katanin p80 WD40 repeat-containing subunit B1 homolog KTN80.2 (1181 aa).

WD repeat units follow at residues A13–S53, G56–A95, G98–T137, G140–K181, H183–S221, P224–D264, and G266–Y303. The DWD box signature appears at F114–R130. 5 disordered regions span residues A361 to L383, K503 to S597, T702 to T739, K754 to T869, and T988 to R1008. 2 stretches are compositionally biased toward polar residues: residues G365–D379 and R509–S526. Basic and acidic residues-rich tracts occupy residues D530–G553 and R569–S585. Composition is skewed to polar residues over residues S703–T739, K754–S791, S822–T841, and I850–M859. A compositionally biased stretch (basic and acidic residues) spans T998–R1008.

The protein belongs to the WD repeat KATNB1 family. Component of KTN80-KTN1 complexes composed of a hexamer of KTN1-KTN80 heterodimers that sense microtubule (MT) geometry to confer precise MT severing. Interacts directly with AAA1/KTN1. Interacts with subunits of the CUL4-based E3 ligase complex DDB1A and DDB1B. Expressed at low levels in siliques, flowers, leaves, stems and roots.

It localises to the cytoplasm. It is found in the cytoskeleton. In terms of biological role, may participate in a complex which severs microtubules in an ATP-dependent manner. Microtubule severing may promote rapid reorganization of cellular microtubule arrays. Confers precision to microtubule (MT) severing by specific targeting of KTN1 to MT cleavage sites such as crossover or branching nucleation sites. Together with other KTN80s, regulates cell elongation by modulating MT organization. Negative regulator of abscisic acid (ABA) responses. May function as a substrate receptor for cullin-RING ubiquitin ligase 4 complexes (CRL4), a family of E3 ligases involved in protein degradation. The sequence is that of Katanin p80 WD40 repeat-containing subunit B1 homolog KTN80.2 from Arabidopsis thaliana (Mouse-ear cress).